A 191-amino-acid polypeptide reads, in one-letter code: MEAKAGPTAATDGAYSVSAEETEKWMEQAMQMAKDALDNTEVPVGCLMVYNNEVVGKGRNEVNQTKNATRHAEMVAIDQALDWCRRRGRSPSEVFEHTVLYVTVEPCIMCAAALRLMRIPLVVYGCQNERFGGCGSVLDIASADLPSTGKPFQCTPGYRAEEAVEMLKTFYKQENPNAPKSKVRKKECHKS.

The CMP/dCMP-type deaminase domain occupies Glu20–Leu145. His71 contributes to the Zn(2+) binding site. The active-site Proton donor is Glu73. Residues Cys107 and Cys110 each coordinate Zn(2+).

It belongs to the cytidine and deoxycytidylate deaminase family. ADAT2 subfamily. The cofactor is Zn(2+).

It carries out the reaction adenosine(34) in tRNA + H2O + H(+) = inosine(34) in tRNA + NH4(+). Its function is as follows. Probably participates in deamination of adenosine-34 to inosine in many tRNAs. The polypeptide is tRNA-specific adenosine deaminase 2 (DEADC1) (Bos taurus (Bovine)).